We begin with the raw amino-acid sequence, 127 residues long: uncharacterized protein (127 aa).

This is an uncharacterized protein from Escherichia coli (strain K12).